We begin with the raw amino-acid sequence, 273 residues long: Putative peptidyl-prolyl cis-trans isomerase Cbf2 (273 aa).

Positions 1–21 are cleaved as a signal peptide; the sequence is MKKFSLVAAALIAGVALNVNA. A PpiC domain is found at 131 to 228; the sequence is PARVQAKHIL…FGYHVILKEN (98 aa).

The catalysed reaction is [protein]-peptidylproline (omega=180) = [protein]-peptidylproline (omega=0). The polypeptide is Putative peptidyl-prolyl cis-trans isomerase Cbf2 (cbf2) (Campylobacter jejuni subsp. jejuni serotype O:23/36 (strain 81-176)).